The chain runs to 778 residues: Endonuclease MutS2 (778 aa).

328-335 (GPNTGGKT) is a binding site for ATP. A Smr domain is found at 703 to 778 (LDLRGKRYEE…GSGCTIANLG (76 aa)).

The protein belongs to the DNA mismatch repair MutS family. MutS2 subfamily. In terms of assembly, homodimer. Binds to stalled ribosomes, contacting rRNA.

Functionally, endonuclease that is involved in the suppression of homologous recombination and thus may have a key role in the control of bacterial genetic diversity. Its function is as follows. Acts as a ribosome collision sensor, splitting the ribosome into its 2 subunits. Detects stalled/collided 70S ribosomes which it binds and splits by an ATP-hydrolysis driven conformational change. Acts upstream of the ribosome quality control system (RQC), a ribosome-associated complex that mediates the extraction of incompletely synthesized nascent chains from stalled ribosomes and their subsequent degradation. Probably generates substrates for RQC. The protein is Endonuclease MutS2 of Streptococcus equi subsp. equi (strain 4047).